The following is a 208-amino-acid chain: 2-phospho-L-lactate guanylyltransferase (208 aa).

It belongs to the CofC family. As to quaternary structure, homodimer.

It carries out the reaction (2S)-2-phospholactate + GTP + H(+) = (2S)-lactyl-2-diphospho-5'-guanosine + diphosphate. The protein operates within cofactor biosynthesis; coenzyme F420 biosynthesis. In terms of biological role, guanylyltransferase that catalyzes the activation of (2S)-2-phospholactate (2-PL) as (2S)-lactyl-2-diphospho-5'-guanosine, via the condensation of 2-PL with GTP. It is involved in the biosynthesis of coenzyme F420, a hydride carrier cofactor. In Methanosarcina barkeri (strain Fusaro / DSM 804), this protein is 2-phospho-L-lactate guanylyltransferase.